An 881-amino-acid polypeptide reads, in one-letter code: Phosphoenolpyruvate carboxylase (881 aa).

Active-site residues include histidine 139 and lysine 544.

This sequence belongs to the PEPCase type 1 family. Mg(2+) serves as cofactor.

The enzyme catalyses oxaloacetate + phosphate = phosphoenolpyruvate + hydrogencarbonate. In terms of biological role, forms oxaloacetate, a four-carbon dicarboxylic acid source for the tricarboxylic acid cycle. The polypeptide is Phosphoenolpyruvate carboxylase (Marinobacter nauticus (strain ATCC 700491 / DSM 11845 / VT8) (Marinobacter aquaeolei)).